Consider the following 191-residue polypeptide: Adenine phosphoribosyltransferase (191 aa).

The protein belongs to the purine/pyrimidine phosphoribosyltransferase family. As to quaternary structure, homodimer.

It localises to the cytoplasm. It carries out the reaction AMP + diphosphate = 5-phospho-alpha-D-ribose 1-diphosphate + adenine. The protein operates within purine metabolism; AMP biosynthesis via salvage pathway; AMP from adenine: step 1/1. Functionally, catalyzes a salvage reaction resulting in the formation of AMP, that is energically less costly than de novo synthesis. The polypeptide is Adenine phosphoribosyltransferase (Nocardia farcinica (strain IFM 10152)).